A 123-amino-acid polypeptide reads, in one-letter code: Small ribosomal subunit protein uS12 (123 aa).

The disordered stretch occupies residues M1 to Q25. Residues I8–S21 show a composition bias toward basic residues. The residue at position 89 (D89) is a 3-methylthioaspartic acid.

Belongs to the universal ribosomal protein uS12 family. Part of the 30S ribosomal subunit. Contacts proteins S8 and S17. May interact with IF1 in the 30S initiation complex.

With S4 and S5 plays an important role in translational accuracy. Functionally, interacts with and stabilizes bases of the 16S rRNA that are involved in tRNA selection in the A site and with the mRNA backbone. Located at the interface of the 30S and 50S subunits, it traverses the body of the 30S subunit contacting proteins on the other side and probably holding the rRNA structure together. The combined cluster of proteins S8, S12 and S17 appears to hold together the shoulder and platform of the 30S subunit. This is Small ribosomal subunit protein uS12 from Chlamydia pneumoniae (Chlamydophila pneumoniae).